A 177-amino-acid chain; its full sequence is Large ribosomal subunit protein uL6 (177 aa).

The protein belongs to the universal ribosomal protein uL6 family. In terms of assembly, part of the 50S ribosomal subunit.

Its function is as follows. This protein binds to the 23S rRNA, and is important in its secondary structure. It is located near the subunit interface in the base of the L7/L12 stalk, and near the tRNA binding site of the peptidyltransferase center. The sequence is that of Large ribosomal subunit protein uL6 from Cupriavidus metallidurans (strain ATCC 43123 / DSM 2839 / NBRC 102507 / CH34) (Ralstonia metallidurans).